Here is a 116-residue protein sequence, read N- to C-terminus: Large ribosomal subunit protein bL19 (116 aa).

It belongs to the bacterial ribosomal protein bL19 family.

This protein is located at the 30S-50S ribosomal subunit interface and may play a role in the structure and function of the aminoacyl-tRNA binding site. The protein is Large ribosomal subunit protein bL19 of Pseudomonas fluorescens (strain ATCC BAA-477 / NRRL B-23932 / Pf-5).